The primary structure comprises 355 residues: Heat-inducible transcription repressor HrcA (355 aa).

This sequence belongs to the HrcA family.

In terms of biological role, negative regulator of class I heat shock genes (grpE-dnaK-dnaJ and groELS operons). Prevents heat-shock induction of these operons. This is Heat-inducible transcription repressor HrcA from Prosthecochloris aestuarii (strain DSM 271 / SK 413).